Reading from the N-terminus, the 131-residue chain is Cystatin J (131 aa).

An N-terminal signal peptide occupies residues 1-18 (MHLYLCVLVCLSIGMANC). The 75-residue stretch at 35–109 (DEILLTGVEF…RMNLPTKCSF (75 aa)) folds into the Cystatin domain. Residues 68–72 (QVVAG) carry the Secondary area of contact motif. Cystine bridges form between Cys-86-Cys-97 and Cys-107-Cys-128.

The protein belongs to the cystatin family.

It localises to the secreted. Its subcellular location is the nematocyst. Functionally, this recombinant protein inhibits the C1 cysteine protease papain (Ki is below 0.5 nM). This chain is Cystatin J, found in Cyanea capillata (Lion's mane jellyfish).